A 122-amino-acid polypeptide reads, in one-letter code: Small ribosomal subunit protein uS13 (122 aa).

The disordered stretch occupies residues 96–122 (LPVRGQRTKTNSRTRKGKRKTIAGKKK). Over residues 101-122 (QRTKTNSRTRKGKRKTIAGKKK) the composition is skewed to basic residues.

Belongs to the universal ribosomal protein uS13 family. Part of the 30S ribosomal subunit. Forms a loose heterodimer with protein S19. Forms two bridges to the 50S subunit in the 70S ribosome.

Located at the top of the head of the 30S subunit, it contacts several helices of the 16S rRNA. In the 70S ribosome it contacts the 23S rRNA (bridge B1a) and protein L5 of the 50S subunit (bridge B1b), connecting the 2 subunits; these bridges are implicated in subunit movement. Contacts the tRNAs in the A and P-sites. This is Small ribosomal subunit protein uS13 from Chlamydia trachomatis serovar L2 (strain ATCC VR-902B / DSM 19102 / 434/Bu).